The following is a 491-amino-acid chain: 3-octaprenyl-4-hydroxybenzoate carboxy-lyase (491 aa).

Asparagine 172 is a Mn(2+) binding site. Residues 175-177, 189-191, and 194-195 each bind prenylated FMN; these read IYR, RWL, and RG. Mn(2+) is bound at residue glutamate 238. Residue aspartate 287 is the Proton donor of the active site.

This sequence belongs to the UbiD family. In terms of assembly, homohexamer. Prenylated FMN serves as cofactor. Requires Mn(2+) as cofactor.

The protein localises to the cell membrane. It carries out the reaction a 4-hydroxy-3-(all-trans-polyprenyl)benzoate + H(+) = a 2-(all-trans-polyprenyl)phenol + CO2. The protein operates within cofactor biosynthesis; ubiquinone biosynthesis. Catalyzes the decarboxylation of 3-octaprenyl-4-hydroxy benzoate to 2-octaprenylphenol, an intermediate step in ubiquinone biosynthesis. In Alcanivorax borkumensis (strain ATCC 700651 / DSM 11573 / NCIMB 13689 / SK2), this protein is 3-octaprenyl-4-hydroxybenzoate carboxy-lyase.